A 412-amino-acid chain; its full sequence is Keratin, type I microfibrillar 48 kDa, component 8C-1 (412 aa).

N-acetylserine is present on serine 1. Positions serine 1–glutamate 55 are head. Residues glutamate 55–leucine 366 form the IF rod domain. A coil 1A region spans residues lysine 56–arginine 90. Residues serine 91–asparagine 101 form a linker 1 region. Residues tyrosine 102 to serine 202 are coil 1B. Positions glutamine 203–valine 218 are linker 12. Residues aspartate 219–glutamate 362 form a coil 2 region. Residues aspartate 363–arginine 412 form a tail region.

This sequence belongs to the intermediate filament family.

Wool microfibrillar keratin. This is Keratin, type I microfibrillar 48 kDa, component 8C-1 from Ovis aries (Sheep).